An 86-amino-acid polypeptide reads, in one-letter code: Small ribosomal subunit protein bS16 (86 aa).

This sequence belongs to the bacterial ribosomal protein bS16 family.

The sequence is that of Small ribosomal subunit protein bS16 from Leptothrix cholodnii (strain ATCC 51168 / LMG 8142 / SP-6) (Leptothrix discophora (strain SP-6)).